Here is a 495-residue protein sequence, read N- to C-terminus: 3-octaprenyl-4-hydroxybenzoate carboxy-lyase (495 aa).

Position 172 (Asn172) interacts with Mn(2+). Prenylated FMN-binding positions include 175 to 177, 189 to 191, and 194 to 195; these read IYR, RWL, and RG. Residue Glu238 participates in Mn(2+) binding. Residue Asp287 is the Proton donor of the active site.

It belongs to the UbiD family. In terms of assembly, homohexamer. Prenylated FMN is required as a cofactor. Requires Mn(2+) as cofactor.

The protein resides in the cell membrane. The enzyme catalyses a 4-hydroxy-3-(all-trans-polyprenyl)benzoate + H(+) = a 2-(all-trans-polyprenyl)phenol + CO2. Its pathway is cofactor biosynthesis; ubiquinone biosynthesis. In terms of biological role, catalyzes the decarboxylation of 3-octaprenyl-4-hydroxy benzoate to 2-octaprenylphenol, an intermediate step in ubiquinone biosynthesis. In Edwardsiella ictaluri (strain 93-146), this protein is 3-octaprenyl-4-hydroxybenzoate carboxy-lyase.